A 437-amino-acid polypeptide reads, in one-letter code: GTPase Der (437 aa).

EngA-type G domains follow at residues 3–168 and 178–353; these read PLIA…PCPE and IKLA…LNRR. Residues 9–16, 56–60, 120–123, 184–191, 231–235, and 296–299 contribute to the GTP site; these read GRPNVGKS, DTGGY, NKVD, DTAGL, and NKWD. The 84-residue stretch at 354–437 folds into the KH-like domain; the sequence is QKISTSNLNR…IPITMRFLRK (84 aa).

This sequence belongs to the TRAFAC class TrmE-Era-EngA-EngB-Septin-like GTPase superfamily. EngA (Der) GTPase family. As to quaternary structure, associates with the 50S ribosomal subunit.

Its function is as follows. GTPase that plays an essential role in the late steps of ribosome biogenesis. This is GTPase Der from Chlorobaculum tepidum (strain ATCC 49652 / DSM 12025 / NBRC 103806 / TLS) (Chlorobium tepidum).